The sequence spans 426 residues: MERISTNQLYNSGIPVTVPSPLPAIPATLDENIPRIPDGQNVPRERELRSTPMPPHQNQSTVAPLHGHFQSSTGSVGPLRSSQAIRFSSVSSNEQYTNANPYNSQPPSSGSSSTLNYGSQYGGFEPSLTDFPRDAGPTWCPDPVDGLLGYTDDVPAGNNLTENSSIAAGDELAKQSEWWNDFMNYDWKDIDNTACTETQPQVGPAAQSSVAVHQSAAQQSVSSQSGEPSAVAIPSPSGASNTSNSKTRMRWTPELHERFVDAVNLLGGSEKATPKGVLKLMKADNLTIYHVKSHLQKYRTARYRPELSEGSSEKKAASKEDIPSIDLKGGNFDLTEALRLQLELQKRLHEQLEIQRSLQLRIEEQGKCLQMMLEQQCIPGTDKAVDASTSAEGTKPSSDLPESSAVKDVPENSQNGIAKQTESGDR.

3 disordered regions span residues 27–81 (ATLD…PLRS), 96–123 (YTNA…QYGG), and 198–247 (TQPQ…NSKT). Polar residues predominate over residues 69 to 81 (FQSSTGSVGPLRS). Low complexity-rich tracts occupy residues 102 to 119 (YNSQ…NYGS) and 205 to 225 (AAQS…SSQS). Over residues 237–246 (SGASNTSNSK) the composition is skewed to polar residues. The region spanning 243–303 (SNSKTRMRWT…HLQKYRTARY (61 aa)) is the HTH myb-type domain. Residues 274–299 (PKGVLKLMKADNLTIYHVKSHLQKYR) constitute a DNA-binding region (H-T-H motif). Disordered stretches follow at residues 302-326 (RYRP…PSID) and 382-426 (DKAV…SGDR). The span at 303-322 (YRPELSEGSSEKKAASKEDI) shows a compositional bias: basic and acidic residues. Composition is skewed to polar residues over residues 387-401 (ASTS…SDLP) and 411-426 (ENSQ…SGDR).

Interacts (via C-terminus) with SPX4 (via N-terminus) in the presence of inositol polyphosphate. Interacts (via C-terminus) with SPX1 and SPX2 (via SPX domain). Interacts with RLI1 in the nucleus.

The protein resides in the nucleus. The protein localises to the cytoplasm. In terms of biological role, transcription factor involved in phosphate starvation signaling. Binds to P1BS, an imperfect palindromic sequence 5'-GNATATNC-3', to promote the expression of inorganic phosphate (Pi) starvation-responsive genes. Functionally redundant with PHR1 and PHR3 in regulating Pi starvation response and Pi homeostasis. Involved in both systematic and local Pi-signaling pathways. Regulates several Pi transporters. PHR2 binding to DNA is repressed redundantly by SPX1, SPX2 and SPX4 in a PI-dependent manner. The DNA-binding activity is also repressed by SPX4. Involved in root growth under Pi deprivation. Involved in the modulation of Pi response and homeostasis together with RLI1; promotes RLI1 expression in response to nitrate availability, thus triggering the nitrate-induced phosphate response (NIPR). This Oryza sativa subsp. indica (Rice) protein is Protein PHOSPHATE STARVATION RESPONSE 2.